We begin with the raw amino-acid sequence, 419 residues long: Zinc finger protein Pegasus (419 aa).

Lys5 participates in a covalent cross-link: Glycyl lysine isopeptide (Lys-Gly) (interchain with G-Cter in SUMO2). C2H2-type zinc fingers lie at residues 82–104 (LKCR…IRIH), 110–132 (HRCH…MRSH), and 138–161 (YKCE…RRKH). Lys185 participates in a covalent cross-link: Glycyl lysine isopeptide (Lys-Gly) (interchain with G-Cter in SUMO2). The segment covering 223-236 (QTDSYESMAKTTPT) has biased composition (polar residues). Disordered regions lie at residues 223–245 (QTDS…DPQE) and 288–356 (MQQP…PTLP). A compositionally biased stretch (low complexity) spans 289-311 (QQPSAQAVVSAVSASLPQSSSPA). The span at 332 to 349 (SEPSAHTSTPSMGNSQPS) shows a compositional bias: polar residues. 2 consecutive C2H2-type zinc fingers follow at residues 364 to 386 (HHCQ…MGCH) and 392 to 416 (FQCN…RGQH).

It belongs to the Ikaros C2H2-type zinc-finger protein family. Self-associates. Interacts with other family members; IKZF1, IKZF2, IKZF3 and IKZF4.

It localises to the nucleus. Functionally, transcriptional repressor that binds the core 5'GNNTGTNG-3' DNA consensus sequence. Involved in megakaryocyte differentiation. The protein is Zinc finger protein Pegasus (IKZF5) of Bos taurus (Bovine).